A 258-amino-acid chain; its full sequence is Imidazole glycerol phosphate synthase subunit HisF (258 aa).

Residues aspartate 12 and aspartate 131 contribute to the active site.

The protein belongs to the HisA/HisF family. Heterodimer of HisH and HisF.

Its subcellular location is the cytoplasm. The enzyme catalyses 5-[(5-phospho-1-deoxy-D-ribulos-1-ylimino)methylamino]-1-(5-phospho-beta-D-ribosyl)imidazole-4-carboxamide + L-glutamine = D-erythro-1-(imidazol-4-yl)glycerol 3-phosphate + 5-amino-1-(5-phospho-beta-D-ribosyl)imidazole-4-carboxamide + L-glutamate + H(+). It participates in amino-acid biosynthesis; L-histidine biosynthesis; L-histidine from 5-phospho-alpha-D-ribose 1-diphosphate: step 5/9. IGPS catalyzes the conversion of PRFAR and glutamine to IGP, AICAR and glutamate. The HisF subunit catalyzes the cyclization activity that produces IGP and AICAR from PRFAR using the ammonia provided by the HisH subunit. The sequence is that of Imidazole glycerol phosphate synthase subunit HisF from Sinorhizobium fredii (strain NBRC 101917 / NGR234).